The primary structure comprises 453 residues: Tubulin beta-1 chain (453 aa).

The GTP site is built by Q12, E71, S140, G144, T145, G146, N206, and N228. Residue E71 coordinates Mg(2+). The interval 431–453 is disordered; it reads TADGVEGYEEEGYENDHPEDDEE. Residues 436 to 453 show a composition bias toward acidic residues; the sequence is EGYEEEGYENDHPEDDEE.

This sequence belongs to the tubulin family. In terms of assembly, dimer of alpha and beta chains. A typical microtubule is a hollow water-filled tube with an outer diameter of 25 nm and an inner diameter of 15 nM. Alpha-beta heterodimers associate head-to-tail to form protofilaments running lengthwise along the microtubule wall with the beta-tubulin subunit facing the microtubule plus end conferring a structural polarity. Microtubules usually have 13 protofilaments but different protofilament numbers can be found in some organisms and specialized cells. Mg(2+) is required as a cofactor.

The protein resides in the cytoplasm. Its subcellular location is the cytoskeleton. Functionally, tubulin is the major constituent of microtubules, a cylinder consisting of laterally associated linear protofilaments composed of alpha- and beta-tubulin heterodimers. Microtubules grow by the addition of GTP-tubulin dimers to the microtubule end, where a stabilizing cap forms. Below the cap, tubulin dimers are in GDP-bound state, owing to GTPase activity of alpha-tubulin. The sequence is that of Tubulin beta-1 chain (TUBB) from Chondrus crispus (Carrageen Irish moss).